A 443-amino-acid polypeptide reads, in one-letter code: Mitochondrial distribution and morphology protein 10 (443 aa).

Belongs to the MDM10 family. As to quaternary structure, component of the ER-mitochondria encounter structure (ERMES) or MDM complex, composed of MMM1, MDM10, MDM12 and MDM34. Associates with the mitochondrial outer membrane sorting assembly machinery SAM(core) complex.

The protein localises to the mitochondrion outer membrane. Its function is as follows. Component of the ERMES/MDM complex, which serves as a molecular tether to connect the endoplasmic reticulum and mitochondria. Components of this complex are involved in the control of mitochondrial shape and protein biogenesis and may function in phospholipid exchange. MDM10 is involved in the late assembly steps of the general translocase of the mitochondrial outer membrane (TOM complex). Functions in the TOM40-specific route of the assembly of outer membrane beta-barrel proteins, including the association of TOM40 with the receptor TOM22 and small TOM proteins. Can associate with the SAM(core) complex as well as the MDM12-MMM1 complex, both involved in late steps of the major beta-barrel assembly pathway, that is responsible for biogenesis of all outer membrane beta-barrel proteins. May act as a switch that shuttles between both complexes and channels precursor proteins into the TOM40-specific pathway. Plays a role in mitochondrial morphology and in the inheritance of mitochondria. The sequence is that of Mitochondrial distribution and morphology protein 10 from Pyricularia oryzae (strain 70-15 / ATCC MYA-4617 / FGSC 8958) (Rice blast fungus).